The primary structure comprises 196 residues: MTKSMYAYVRDAWKIPDDTGVKALLWERMQDWRREGSIVRVRRPTRIDRARALGYKAKQGIVVVRVKVRRGGRRASRYVRGRRTARMGVNRKTMGKSIQRIAEERACRKYPNMEVLNSYWVGEDGRQKWYEVILLDPHHPSIINDKTLNWISKPGHRGRSERGLTSAGVKGRGMRRRGKGTEKCRPSVRANANRAK.

The tract at residues proline 154–lysine 196 is disordered.

This sequence belongs to the eukaryotic ribosomal protein eL15 family.

The chain is Large ribosomal subunit protein eL15 from Methanospirillum hungatei JF-1 (strain ATCC 27890 / DSM 864 / NBRC 100397 / JF-1).